The following is a 434-amino-acid chain: Progestin and adipoQ receptor-like protein 1 (434 aa).

The Cytoplasmic portion of the chain corresponds to 1 to 201 (MNPDEVNRAL…KSIWSLHTET (201 aa)). Disordered stretches follow at residues 74–103 (LPQQEGHRSRATSFAGRIRAGSDDEAMPKH) and 118–137 (EINLQGTPDKRKDDEDELEV). Residues 202–222 (GNIWTHLIGCVAFFFLACWFL) traverse the membrane as a helical segment. Topologically, residues 223–234 (TRPDNHIQFQEK) are extracellular. Residues 235–255 (VVFSFFFAGAVLCLGLSFAFH) form a helical membrane-spanning segment. Topologically, residues 256-273 (TLSCHSVNVVKIFCKLDY) are cytoplasmic. Residues 274-294 (MGISLLIIGSFIPWIYYGFYC) form a helical membrane-spanning segment. Residues 295-299 (RREPK) are Extracellular-facing. Residues 300–320 (ITYIAMVSVLGIGAIVVSLWD) form a helical membrane-spanning segment. At 321–331 (KFSESRFRPIR) the chain is on the cytoplasmic side. A helical transmembrane segment spans residues 332–352 (AAVFVGMGCSGVIPTIHYIIT). Over 353 to 362 (DGVHSLFADN) the chain is Extracellular. A helical membrane pass occupies residues 363-383 (SFHWLLLMAFLYLLGAGLYAT). At 384 to 403 (RTPERFFPGKCDIWFQSHQL) the chain is on the cytoplasmic side. A helical transmembrane segment spans residues 404–424 (FHTCVVIAAFVHYYGISEMAF). Residues 425-434 (ARLNEQCPVR) lie on the Extracellular side of the membrane.

The protein belongs to the ADIPOR family.

The protein resides in the membrane. Probable receptor, which may be involved in metabolic pathways that regulate lipid metabolism such as fatty acid oxidation. The sequence is that of Progestin and adipoQ receptor-like protein 1 (paqr-1) from Caenorhabditis elegans.